We begin with the raw amino-acid sequence, 485 residues long: Catalase isozyme 1 (485 aa).

Active-site residues include histidine 58 and asparagine 131. Tyrosine 341 provides a ligand contact to heme.

This sequence belongs to the catalase family. In terms of assembly, homotetramer. Heme is required as a cofactor.

Its subcellular location is the peroxisome. The enzyme catalyses 2 H2O2 = O2 + 2 H2O. In terms of biological role, occurs in almost all aerobically respiring organisms and serves to protect cells from the toxic effects of hydrogen peroxide. The polypeptide is Catalase isozyme 1 (CAT1) (Nicotiana plumbaginifolia (Leadwort-leaved tobacco)).